Here is a 220-residue protein sequence, read N- to C-terminus: Ribose-5-phosphate isomerase A (220 aa).

Residues 28–31 (TGST), 81–84 (DGAD), and 94–97 (KGGG) each bind substrate. Residue Glu-103 is the Proton acceptor of the active site. Lys-121 contributes to the substrate binding site.

It belongs to the ribose 5-phosphate isomerase family. As to quaternary structure, homodimer.

It carries out the reaction aldehydo-D-ribose 5-phosphate = D-ribulose 5-phosphate. It participates in carbohydrate degradation; pentose phosphate pathway; D-ribose 5-phosphate from D-ribulose 5-phosphate (non-oxidative stage): step 1/1. Catalyzes the reversible conversion of ribose-5-phosphate to ribulose 5-phosphate. The protein is Ribose-5-phosphate isomerase A of Shewanella sp. (strain W3-18-1).